Reading from the N-terminus, the 455-residue chain is Adenylyltransferase and sulfurtransferase UBA4 (455 aa).

ATP-binding positions include Gly-93, Asp-114, 121–125 (SNLHR), Lys-138, and 182–183 (DH). The Zn(2+) site is built by Cys-224 and Cys-227. Cys-241 (glycyl thioester intermediate; for adenylyltransferase activity) is an active-site residue. Cys-302 and Cys-305 together coordinate Zn(2+). One can recognise a Rhodanese domain in the interval 355–453 (QSREHTLIDV…WSEDIDAAFP (99 aa)). Cys-413 serves as the catalytic Cysteine persulfide intermediate; for sulfurtransferase activity.

The protein in the N-terminal section; belongs to the HesA/MoeB/ThiF family. UBA4 subfamily. Requires Zn(2+) as cofactor.

Its subcellular location is the cytoplasm. It is found in the cytosol. The protein operates within tRNA modification; 5-methoxycarbonylmethyl-2-thiouridine-tRNA biosynthesis. Functionally, plays a central role in 2-thiolation of mcm(5)S(2)U at tRNA wobble positions of cytosolic tRNA(Lys), tRNA(Glu) and tRNA(Gln). Acts by mediating the C-terminal thiocarboxylation of sulfur carrier URM1. Its N-terminus first activates URM1 as acyl-adenylate (-COAMP), then the persulfide sulfur on the catalytic cysteine is transferred to URM1 to form thiocarboxylation (-COSH) of its C-terminus. The reaction probably involves hydrogen sulfide that is generated from the persulfide intermediate and that acts as a nucleophile towards URM1. Subsequently, a transient disulfide bond is formed. Does not use thiosulfate as sulfur donor; NFS1 probably acting as a sulfur donor for thiocarboxylation reactions. Prior mcm(5) tRNA modification by the elongator complex is required for 2-thiolation. May also be involved in protein urmylation. The chain is Adenylyltransferase and sulfurtransferase UBA4 from Lodderomyces elongisporus (strain ATCC 11503 / CBS 2605 / JCM 1781 / NBRC 1676 / NRRL YB-4239) (Yeast).